Consider the following 199-residue polypeptide: dITP/XTP pyrophosphatase (199 aa).

7–12 (TGNAGK) is a substrate binding site. Residue aspartate 68 is the Proton acceptor of the active site. Residue aspartate 68 participates in Mg(2+) binding. Substrate contacts are provided by residues serine 69, 153–156 (FGYD), lysine 176, and 181–182 (HR).

Belongs to the HAM1 NTPase family. In terms of assembly, homodimer. Mg(2+) serves as cofactor.

The catalysed reaction is XTP + H2O = XMP + diphosphate + H(+). It catalyses the reaction dITP + H2O = dIMP + diphosphate + H(+). It carries out the reaction ITP + H2O = IMP + diphosphate + H(+). Pyrophosphatase that catalyzes the hydrolysis of nucleoside triphosphates to their monophosphate derivatives, with a high preference for the non-canonical purine nucleotides XTP (xanthosine triphosphate), dITP (deoxyinosine triphosphate) and ITP. Seems to function as a house-cleaning enzyme that removes non-canonical purine nucleotides from the nucleotide pool, thus preventing their incorporation into DNA/RNA and avoiding chromosomal lesions. The sequence is that of dITP/XTP pyrophosphatase from Halorhodospira halophila (strain DSM 244 / SL1) (Ectothiorhodospira halophila (strain DSM 244 / SL1)).